The chain runs to 130 residues: MGKDKKASGSGSGSKGGKDAGNKDAGKDAGKASKGAQSINVRHILCEKHGKKEEALAKIRDGADFGAVAREYSEDKARTGGSLGWKQKGTLDPEFEKVAFALETSSTSSPKIGEVKTQFGYHIIMVEGKK.

Residues 1–38 (MGKDKKASGSGSGSKGGKDAGNKDAGKDAGKASKGAQS) form a disordered region. The segment covering 16 to 31 (GGKDAGNKDAGKDAGK) has biased composition (basic and acidic residues). Residues 36-128 (AQSINVRHIL…FGYHIIMVEG (93 aa)) form the PpiC domain.

It belongs to the PpiC/parvulin rotamase family. PIN4 subfamily.

The enzyme catalyses [protein]-peptidylproline (omega=180) = [protein]-peptidylproline (omega=0). Its function is as follows. PPIases accelerate the folding of proteins. It catalyzes the cis-trans isomerization of proline imidic peptide bonds in oligopeptides. This is Peptidyl-prolyl cis-trans isomerase pin4 (ppi-5) from Neurospora crassa (strain ATCC 24698 / 74-OR23-1A / CBS 708.71 / DSM 1257 / FGSC 987).